The sequence spans 449 residues: Metacaspase-1 (449 aa).

The interval 1-132 (MFPGQGRHTY…YSRPPTNQQS (132 aa)) is disordered. Residues 10 to 26 (YGGQQQLLQLQQYNYGP) show a composition bias toward low complexity. Pro residues predominate over residues 27-55 (PQGPPPNGYGPPPGPPPNGYGPPPGPPPQ). The span at 56–66 (NSWGYGNPSGT) shows a compositional bias: polar residues. 2 stretches are compositionally biased toward low complexity: residues 67-91 (QSSN…YQRP) and 98-112 (QSGN…NGEP). The segment covering 119 to 132 (GSGQYSRPPTNQQS) has biased composition (polar residues). Residues His-232 and Cys-293 contribute to the active site.

The protein belongs to the peptidase C14B family.

Involved in cell death (apoptosis). The sequence is that of Metacaspase-1 (MCA1) from Lodderomyces elongisporus (strain ATCC 11503 / CBS 2605 / JCM 1781 / NBRC 1676 / NRRL YB-4239) (Yeast).